A 328-amino-acid polypeptide reads, in one-letter code: Pleckstrin homology domain protein OPY1 (328 aa).

Residues Asn19–His52 are disordered. Polar residues predominate over residues Pro24–Asn41. The interval Ala213–Ile328 is required for targeting to the cell membrane. Residues His215–Leu318 enclose the PH domain.

Interacts with MSS4 (via N-terminus); to negatively regulate MSS4 kinase activity.

It localises to the cell membrane. Its subcellular location is the cytoplasm. Functionally, binds phosphatidylinositol 4,5-bisphosphate (PtdIns(4,5)P2/PIP2) at the cell membrane. Negatively regulates the activity of phosphatidylinositol 4-phosphate 5-kinase MSS4. In Saccharomyces cerevisiae (strain ATCC 204508 / S288c) (Baker's yeast), this protein is Pleckstrin homology domain protein OPY1 (OPY1).